The primary structure comprises 664 residues: Semaphorin-7A (664 aa).

Positions 1 to 44 (MTPPPPGRAAPSAPRARVLSLPARFGLPLRLRLLLVFWVAAASA) are cleaved as a signal peptide. In terms of domain architecture, Sema spans 53-488 (RISAVWKGQD…SQWEVSQVPL (436 aa)). Asn-102 carries an N-linked (GlcNAc...) asparagine glycan. A disulfide bridge connects residues Cys-117 and Cys-123. Arg-132 carries the asymmetric dimethylarginine modification. Cysteines 140 and 149 form a disulfide. 2 N-linked (GlcNAc...) asparagine glycosylation sites follow: Asn-154 and Asn-256. Cystine bridges form between Cys-264/Cys-364, Cys-289/Cys-333, Cys-491/Cys-509, Cys-498/Cys-539, Cys-501/Cys-516, Cys-564/Cys-611, and Cys-585/Cys-594. The segment at 265–267 (RGD) is interaction with integrins. Positions 265-267 (RGD) match the Cell attachment site motif. N-linked (GlcNAc...) asparagine glycosylation occurs at Asn-328. The Ig-like C2-type domain maps to 542–627 (PKPDEAPLQK…YLREAQHWEL (86 aa)). The N-linked (GlcNAc...) asparagine glycan is linked to Asn-600. The GPI-anchor amidated alanine moiety is linked to residue Ala-646. Positions 647–664 (ASFWLGVLPTLILGLLVH) are cleaved as a propeptide — removed in mature form.

It belongs to the semaphorin family. Interacts with PLXNC1. Interacts with ITGA1 and ITGB1. Highly expressed in activated T-cells (at protein level). Highest expression in brain. Lower in heart, thymus, spleen, testis and ovary. The expression increases in late embryonic and postnatal stages. Detected in T-cells.

It localises to the cell membrane. Its function is as follows. Plays an important role in integrin-mediated signaling and functions both in regulating cell migration and immune responses. Promotes formation of focal adhesion complexes, activation of the protein kinase PTK2/FAK1 and subsequent phosphorylation of MAPK1 and MAPK3. Promotes production of pro-inflammatory cytokines by monocytes and macrophages. Plays an important role in modulating inflammation and T-cell-mediated immune responses. Promotes axon growth in the embryonic olfactory bulb. Promotes attachment, spreading and dendrite outgrowth in melanocytes. This Mus musculus (Mouse) protein is Semaphorin-7A (Sema7a).